The chain runs to 295 residues: Spermatogenesis-associated protein 4 (295 aa).

Positions 1 to 34 are disordered; the sequence is MAAAGQAEECLPLPAAESSKTSLPTPPAVPAGKK. The Calponin-homology (CH) domain maps to 48 to 154; the sequence is SRLSRSVLRW…QEIYTLLTHQ (107 aa). The disordered stretch occupies residues 251-295; it reads KRRYKSRGSKEKAAQPLSKSDNDGNARKEIHVKQSGNPCENTENL. The span at 270 to 282 shows a compositional bias: basic and acidic residues; the sequence is SDNDGNARKEIHV. The segment covering 284–295 has biased composition (polar residues); that stretch reads QSGNPCENTENL.

As to expression, testis.

The protein localises to the nucleus. Functionally, may play a role in apoptosis regulation. The sequence is that of Spermatogenesis-associated protein 4 (Spata4) from Mus musculus (Mouse).